Here is a 241-residue protein sequence, read N- to C-terminus: 6-hydroxymethyl-7,8-dihydropterin pyrophosphokinase (241 aa).

The protein belongs to the archaeal 6-HMPDK family. The cofactor is Mg(2+).

It carries out the reaction 6-hydroxymethyl-7,8-dihydropterin + ATP = (7,8-dihydropterin-6-yl)methyl diphosphate + AMP + H(+). It participates in cofactor biosynthesis; 5,6,7,8-tetrahydromethanopterin biosynthesis. Functionally, catalyzes the transfer of diphosphate from ATP to 6-hydroxymethyl-7,8-dihydropterin (6-HMD), leading to 6-hydroxymethyl-7,8-dihydropterin diphosphate (6-HMDP). The polypeptide is 6-hydroxymethyl-7,8-dihydropterin pyrophosphokinase (Methanocaldococcus jannaschii (strain ATCC 43067 / DSM 2661 / JAL-1 / JCM 10045 / NBRC 100440) (Methanococcus jannaschii)).